The sequence spans 284 residues: Bifunctional protein FolD (284 aa).

Residues 166–168 (GAS) and Ile232 each bind NADP(+).

This sequence belongs to the tetrahydrofolate dehydrogenase/cyclohydrolase family. Homodimer.

It catalyses the reaction (6R)-5,10-methylene-5,6,7,8-tetrahydrofolate + NADP(+) = (6R)-5,10-methenyltetrahydrofolate + NADPH. It carries out the reaction (6R)-5,10-methenyltetrahydrofolate + H2O = (6R)-10-formyltetrahydrofolate + H(+). The protein operates within one-carbon metabolism; tetrahydrofolate interconversion. In terms of biological role, catalyzes the oxidation of 5,10-methylenetetrahydrofolate to 5,10-methenyltetrahydrofolate and then the hydrolysis of 5,10-methenyltetrahydrofolate to 10-formyltetrahydrofolate. The protein is Bifunctional protein FolD of Shewanella frigidimarina (strain NCIMB 400).